Reading from the N-terminus, the 1254-residue chain is Zinc finger protein BRUTUS-like At1g18910 (1254 aa).

Positions 1–30 (MGVGDPLPLPPEKNRREVNKPPDIASTSSS) are disordered. A helical transmembrane segment spans residues 454–474 (IHFLPLGLLKCVIMWFSAQLP). The CHY-type zinc-finger motif lies at 1013 to 1082 (PHKLIFGCKH…ASCSNISCSS (70 aa)). Cys1020, His1022, Cys1033, Cys1034, Cys1040, Cys1043, His1044, His1050, Cys1062, Cys1065, Cys1075, Cys1080, Cys1089, Cys1092, His1103, Cys1104, Cys1107, Cys1110, His1122, Cys1123, Cys1126, Cys1129, His1137, and Cys1139 together coordinate Zn(2+). A CTCHY-type zinc finger spans residues 1084–1147 (MGKYYCKICK…VCREKCLEDN (64 aa)). The RING-type; atypical zinc finger occupies 1148–1190 (CPICHEYIFTSNSPVKALPCGHVMHSTCFQEYTCSHYTCPICS).

As to quaternary structure, binds zinc and iron ions.

Its subcellular location is the membrane. The protein resides in the nucleus. It functions in the pathway protein modification; protein ubiquitination. Its function is as follows. Probable E3 ubiquitin-protein ligase that may regulate the response to iron deficiency and thus contributes to iron homeostasis. In Arabidopsis thaliana (Mouse-ear cress), this protein is Zinc finger protein BRUTUS-like At1g18910.